Here is a 61-residue protein sequence, read N- to C-terminus: Odorranain-A6 (61 aa).

The N-terminal stretch at 1–22 (MFSMKKSLLLLFFLGTISLSLC) is a signal peptide. Positions 23–45 (EQERDAEEEEGSENGAEDIKINR) are excised as a propeptide.

This sequence belongs to the frog skin active peptide (FSAP) family. Brevinin subfamily. In terms of tissue distribution, expressed by the skin glands.

It localises to the secreted. The polypeptide is Odorranain-A6 (Odorrana hainanensis (Odor frog)).